Reading from the N-terminus, the 91-residue chain is Elongation factor 1-beta (91 aa).

The protein belongs to the EF-1-beta/EF-1-delta family.

Promotes the exchange of GDP for GTP in EF-1-alpha/GDP, thus allowing the regeneration of EF-1-alpha/GTP that could then be used to form the ternary complex EF-1-alpha/GTP/AAtRNA. The polypeptide is Elongation factor 1-beta (Thermococcus gammatolerans (strain DSM 15229 / JCM 11827 / EJ3)).